A 442-amino-acid chain; its full sequence is tRNA modification GTPase MnmE (442 aa).

Residues Arg22, Glu79, and Lys119 each coordinate (6S)-5-formyl-5,6,7,8-tetrahydrofolate. A TrmE-type G domain is found at 216 to 366; it reads GIKTCLVGAP…LLEKIKSIFA (151 aa). Asn226 contacts K(+). GTP is bound by residues 226 to 231, 245 to 251, and 270 to 273; these read NSGKSS, SEIPGTT, and DTAG. Ser230 serves as a coordination point for Mg(2+). Residues Ser245, Ile247, and Thr250 each coordinate K(+). Thr251 lines the Mg(2+) pocket. Lys442 lines the (6S)-5-formyl-5,6,7,8-tetrahydrofolate pocket.

It belongs to the TRAFAC class TrmE-Era-EngA-EngB-Septin-like GTPase superfamily. TrmE GTPase family. Homodimer. Heterotetramer of two MnmE and two MnmG subunits. The cofactor is K(+).

It is found in the cytoplasm. Exhibits a very high intrinsic GTPase hydrolysis rate. Involved in the addition of a carboxymethylaminomethyl (cmnm) group at the wobble position (U34) of certain tRNAs, forming tRNA-cmnm(5)s(2)U34. The protein is tRNA modification GTPase MnmE of Mesomycoplasma hyopneumoniae (strain J / ATCC 25934 / NCTC 10110) (Mycoplasma hyopneumoniae).